The sequence spans 1439 residues: MPGSPARGAAMGGGPRGLRKTWTELLAGRVKKQKYDPEREQKLKDSALKLLRYHQNMHDLLLEVEEPQCKRLRLSELIDRDSADASSDRSASFIRSAFRDQASRLGVPVGVLSAKVFARSVQQVCVEPSHPVLLSPEQSKKLSSLLMIARHLLAQNMFSRLTFCQELWKAQNSLLLEAMWRLHTHSVVSLQELLQSHPDSEAMAMWLFRNLRSLCEQIGASCPSPDTTEAMLSGLVQLLISRGFQGSSDPRRLVEPERLPQVATDVLQRMLAFSLDTLEADPQTTLDCQAVSGWIPIYSGHTCCGVVTENSLKSFFSHTLTQILTHKPVLKVSDAIQMQKEWSFAKTHHLLTDLHCRVLATLGPEESVGRLQEVLEMQEVNWQHVLSCVSTLVVCFPEAQQLVKGWVASLMARAFESYHLDSMVTAFLIVRQATLEGPYVFPSYADWFKESFGSSHGYHSCSKKTLVFLFKFLSDLVPWEAPRYMQVHIFHPPLVPSKYHSLLTDYISLAKTRLADLKVSLENVGLYEDLSSPGDIAERESQAVQDVKKAIMVFEQTGKIPMPVLEASIFRRPYYVSHFLPTLLAPRVLPEVPDPRVALIETLKRADKIPSSIYDAYRKACASAEKQQPENATSAQRTEADCAKEPLGLLTAALEELRALMTDPTQYSVISAQVAVVSEKLNAVLGHRNDGGSLQRAKIQLSVLPSTLQKQDQAVVDLLLTAFCQNLMAASSFVPPERQSPWAVLFVRTLCGHVLLPAVLTRLRQLLRHQGQSLSTSHVLGLAALAVHLGECRSMLPEVDPDVLAPSAGSLCVPDFLNSLLTCRTRDSLLFCMNFCTAAVSYCLCKFSALRNCLSPGLIKKFQFVVLRLFPEARAPCAPEHAACVPWRPLYLPSADWQRAALSLWRRDSFQELLKDKEFYLTYRDWVQLELEIQPEADVLSDMERHDFHQWAIYERYLPAPTALGGCGGDLEEACTVLVSEIMDFHQSSRSYNHSEDSDLVLGGRTGNKDILSRLQEIALDLELDQGSAVPHGCSTPQSHFLFRVFRRRLQALARPDSMATSLRRQQELLTCKRLLLCLPPSVLVGGPQAGQPISPNCGEFFSLVNSELRNFCCHGSVLTSDITIHFFRGLLRVCLRSQDPALVANQTLTECQTKCPVILTSALLWWSSLEPVLCGRWMRCYQSPLPRELRRLQEAREFASNFASASASPAPSPAWIAAAALHFAWRGVRKEDVTAHLQRLDCQREELLIALFFFSLMGLLSSYLTQRDTAEHLKAVDICAEVLTCLERRKVSWLVLFQLTEKDAKLGHLLHLAPDQHTRLLPLAFYSLLSCFSEGAAVREAAFLHVAVDMYLKLLQLFVDGETRLQGHSESQGSPVQLITKARVFLLQLIPQCPKQCFSNMTELLAGRGDCDPEVSNALRQRQQADPSFDLYQEPQLF.

The tract at residues 1 to 20 (MPGSPARGAAMGGGPRGLRK) is disordered. Residues 19–35 (RKTWTELLAGRVKKQKY) carry the Nuclear localization signal motif.

As to quaternary structure, belongs to the multisubunit FA complex composed of FANCA, FANCB, FANCC, FANCE, FANCF, FANCG, FANCL/PHF9 and FANCM. In complex with FANCF, FANCG and FANCL, but not with FANCC, nor FANCE, interacts with HES1; this interaction may be essential for the stability and nuclear localization of FA core complex proteins. The complex with FANCC and FANCG may also include EIF2AK2 and HSP70. Interacts with FAAP20; interaction is direct. In terms of processing, phosphorylated primarily on serine residues. Phosphorylation is required for the formation of the nuclear complex. Mainly expressed in testis and lymphoid tissues like thymus, lymph nodes, and spleen, and at lower levels in kidney and ovary.

It is found in the nucleus. Its subcellular location is the cytoplasm. Functionally, DNA repair protein that may operate in a postreplication repair or a cell cycle checkpoint function. May be involved in interstrand DNA cross-link repair and in the maintenance of normal chromosome stability. The polypeptide is Fanconi anemia group A protein homolog (Fanca) (Mus musculus (Mouse)).